Here is a 457-residue protein sequence, read N- to C-terminus: V-type ATP synthase beta chain (457 aa).

Belongs to the ATPase alpha/beta chains family.

In terms of biological role, produces ATP from ADP in the presence of a proton gradient across the membrane. The V-type beta chain is a regulatory subunit. The sequence is that of V-type ATP synthase beta chain from Clostridioides difficile (strain 630) (Peptoclostridium difficile).